A 262-amino-acid polypeptide reads, in one-letter code: Cytochrome c oxidase subunit 2 (262 aa).

2 consecutive transmembrane segments (helical) span residues histidine 31 to isoleucine 51 and isoleucine 72 to leucine 92. 6 residues coordinate Cu cation: histidine 175, cysteine 210, glutamate 212, cysteine 214, histidine 218, and methionine 221. Glutamate 212 lines the Mg(2+) pocket.

It belongs to the cytochrome c oxidase subunit 2 family. Component of the cytochrome c oxidase (complex IV, CIV), a multisubunit enzyme composed of a catalytic core of 3 subunits and several supernumerary subunits. The complex exists as a monomer or a dimer and forms supercomplexes (SCs) in the inner mitochondrial membrane with ubiquinol-cytochrome c oxidoreductase (cytochrome b-c1 complex, complex III, CIII). Cu cation is required as a cofactor.

The protein resides in the mitochondrion inner membrane. The catalysed reaction is 4 Fe(II)-[cytochrome c] + O2 + 8 H(+)(in) = 4 Fe(III)-[cytochrome c] + 2 H2O + 4 H(+)(out). Component of the cytochrome c oxidase, the last enzyme in the mitochondrial electron transport chain which drives oxidative phosphorylation. The respiratory chain contains 3 multisubunit complexes succinate dehydrogenase (complex II, CII), ubiquinol-cytochrome c oxidoreductase (cytochrome b-c1 complex, complex III, CIII) and cytochrome c oxidase (complex IV, CIV), that cooperate to transfer electrons derived from NADH and succinate to molecular oxygen, creating an electrochemical gradient over the inner membrane that drives transmembrane transport and the ATP synthase. Cytochrome c oxidase is the component of the respiratory chain that catalyzes the reduction of oxygen to water. Electrons originating from reduced cytochrome c in the intermembrane space (IMS) are transferred via the dinuclear copper A center (CU(A)) of subunit 2 and heme A of subunit 1 to the active site in subunit 1, a binuclear center (BNC) formed by heme A3 and copper B (CU(B)). The BNC reduces molecular oxygen to 2 water molecules using 4 electrons from cytochrome c in the IMS and 4 protons from the mitochondrial matrix. The chain is Cytochrome c oxidase subunit 2 (COX2) from Candida albicans (strain SC5314 / ATCC MYA-2876) (Yeast).